The sequence spans 206 residues: Small ribosomal subunit protein uS4 (206 aa).

The S4 RNA-binding domain occupies 96–156 (GRLDNVVYRM…EKAKKQSRVK (61 aa)).

This sequence belongs to the universal ribosomal protein uS4 family. Part of the 30S ribosomal subunit. Contacts protein S5. The interaction surface between S4 and S5 is involved in control of translational fidelity.

In terms of biological role, one of the primary rRNA binding proteins, it binds directly to 16S rRNA where it nucleates assembly of the body of the 30S subunit. Its function is as follows. With S5 and S12 plays an important role in translational accuracy. The protein is Small ribosomal subunit protein uS4 of Enterobacter sp. (strain 638).